The primary structure comprises 74 residues: MPKAGIHPRYEEARIVCGCGAIYETRSTKPGVTNVEICANCHPFFTGQQKIVDAEGRVDRFLKKYGNVQPRTKR.

Residues cysteine 17, cysteine 19, cysteine 38, and cysteine 41 each contribute to the Zn(2+) site.

This sequence belongs to the bacterial ribosomal protein bL31 family. Type A subfamily. Part of the 50S ribosomal subunit. It depends on Zn(2+) as a cofactor.

Binds the 23S rRNA. The polypeptide is Large ribosomal subunit protein bL31 (Gloeobacter violaceus (strain ATCC 29082 / PCC 7421)).